The sequence spans 150 residues: Ribonuclease H (150 aa).

One can recognise an RNase H type-1 domain in the interval 1-141; sequence MKFIEVHTDG…VDVLARNQAI (141 aa). Aspartate 9, glutamate 47, aspartate 69, and aspartate 133 together coordinate Mg(2+).

The protein belongs to the RNase H family. Monomer. Requires Mg(2+) as cofactor.

Its subcellular location is the cytoplasm. The catalysed reaction is Endonucleolytic cleavage to 5'-phosphomonoester.. Functionally, endonuclease that specifically degrades the RNA of RNA-DNA hybrids. The protein is Ribonuclease H of Xanthomonas euvesicatoria pv. vesicatoria (strain 85-10) (Xanthomonas campestris pv. vesicatoria).